Here is a 1031-residue protein sequence, read N- to C-terminus: Protein translocase subunit SecA (1031 aa).

ATP-binding positions include Gln-143, Gly-161–Thr-165, and Asp-661. Residues Lys-963–Ser-973 show a composition bias toward basic and acidic residues. The disordered stretch occupies residues Lys-963–Arg-1031. Zn(2+)-binding residues include Cys-1017, Cys-1019, Cys-1028, and Cys-1029.

The protein belongs to the SecA family. As to quaternary structure, monomer and homodimer. Part of the essential Sec protein translocation apparatus which comprises SecA, SecYEG and auxiliary proteins SecDF. Other proteins may also be involved. Zn(2+) is required as a cofactor.

It localises to the cell inner membrane. Its subcellular location is the cytoplasm. It carries out the reaction ATP + H2O + cellular proteinSide 1 = ADP + phosphate + cellular proteinSide 2.. In terms of biological role, part of the Sec protein translocase complex. Interacts with the SecYEG preprotein conducting channel. Has a central role in coupling the hydrolysis of ATP to the transfer of proteins into and across the cell membrane, serving as an ATP-driven molecular motor driving the stepwise translocation of polypeptide chains across the membrane. The polypeptide is Protein translocase subunit SecA (Prosthecochloris aestuarii (strain DSM 271 / SK 413)).